The sequence spans 83 residues: Alpha-neurotoxin NTX-2 (83 aa).

Residues 1–21 (MKTLLLTLLVVTIVCLDLGYT) form the signal peptide. Cystine bridges form between Cys-24-Cys-45, Cys-38-Cys-62, Cys-64-Cys-75, and Cys-76-Cys-81.

It belongs to the three-finger toxin family. Short-chain subfamily. Type I alpha-neurotoxin sub-subfamily. Expressed by the venom gland.

It localises to the secreted. In terms of biological role, binds to muscle nicotinic acetylcholine receptor (nAChR) and inhibit acetylcholine from binding to the receptor, thereby impairing neuromuscular transmission. The chain is Alpha-neurotoxin NTX-2 from Naja sputatrix (Malayan spitting cobra).